The sequence spans 389 residues: 8-amino-7-oxononanoate synthase 2 (389 aa).

Arg21 serves as a coordination point for substrate. A pyridoxal 5'-phosphate-binding site is contributed by 108 to 109 (GY). Residue His133 participates in substrate binding. Residues Ser180, 205–208 (DDAH), and 234–237 (TLSK) contribute to the pyridoxal 5'-phosphate site. Residue Lys237 is modified to N6-(pyridoxal phosphate)lysine. Thr351 contacts substrate.

Belongs to the class-II pyridoxal-phosphate-dependent aminotransferase family. BioF subfamily. In terms of assembly, homodimer. The cofactor is pyridoxal 5'-phosphate.

The enzyme catalyses 6-carboxyhexanoyl-[ACP] + L-alanine + H(+) = (8S)-8-amino-7-oxononanoate + holo-[ACP] + CO2. It participates in cofactor biosynthesis; biotin biosynthesis. Its function is as follows. Catalyzes the decarboxylative condensation of pimeloyl-[acyl-carrier protein] and L-alanine to produce 8-amino-7-oxononanoate (AON), [acyl-carrier protein], and carbon dioxide. This chain is 8-amino-7-oxononanoate synthase 2 (bioF), found in Bacillus subtilis (strain 168).